A 155-amino-acid chain; its full sequence is Large ribosomal subunit protein uL11 (155 aa).

This sequence belongs to the universal ribosomal protein uL11 family. In terms of assembly, part of the ribosomal stalk of the 50S ribosomal subunit. Interacts with L10 and the large rRNA to form the base of the stalk. L10 forms an elongated spine to which L12 dimers bind in a sequential fashion forming a multimeric L10(L12)X complex. In terms of processing, one or more lysine residues are methylated.

Functionally, forms part of the ribosomal stalk which helps the ribosome interact with GTP-bound translation factors. The sequence is that of Large ribosomal subunit protein uL11 from Malacoplasma penetrans (strain HF-2) (Mycoplasma penetrans).